The sequence spans 155 residues: Sec-independent protein translocase protein TatB (155 aa).

A helical transmembrane segment spans residues 1–21; it reads MFGMGFFEILVVLVVAIIFLG. The interval 109–155 is disordered; the sequence is SLENNAPPKHLNKEVSNREVFHNEPPKEIELIANNNTTKHDKEKEHV. Composition is skewed to basic and acidic residues over residues 119–138 and 146–155; these read LNKE…KEIE and TKHDKEKEHV.

This sequence belongs to the TatB family. As to quaternary structure, the Tat system comprises two distinct complexes: a TatABC complex, containing multiple copies of TatA, TatB and TatC subunits, and a separate TatA complex, containing only TatA subunits. Substrates initially bind to the TatABC complex, which probably triggers association of the separate TatA complex to form the active translocon.

The protein resides in the cell inner membrane. Functionally, part of the twin-arginine translocation (Tat) system that transports large folded proteins containing a characteristic twin-arginine motif in their signal peptide across membranes. Together with TatC, TatB is part of a receptor directly interacting with Tat signal peptides. TatB may form an oligomeric binding site that transiently accommodates folded Tat precursor proteins before their translocation. This Helicobacter acinonychis (strain Sheeba) protein is Sec-independent protein translocase protein TatB.